Consider the following 300-residue polypeptide: Alpha-ketoglutarate-dependent dioxygenase alkB homolog 4 (300 aa).

Ala-2 is subject to N-acetylalanine. The 125-residue stretch at 148-272 folds into the Fe2OG dioxygenase domain; sequence PVEQCNLDYS…RVCATFRELS (125 aa). The Fe cation site is built by His-167, Asp-169, and His-252. Residue Arg-263 participates in 2-oxoglutarate binding.

It belongs to the alkB family. In terms of assembly, interacts with ZFHX3, MLLT3, MLLT1, HSF4, EP300, TES, EIF3C, MTMR6 and PSMA6. The cofactor is Fe(2+).

The protein localises to the cytoplasm. It localises to the nucleus. Its subcellular location is the nucleolus. The protein resides in the midbody. The catalysed reaction is an N(6)-methyl-2'-deoxyadenosine in DNA + 2-oxoglutarate + O2 = a 2'-deoxyadenosine in DNA + formaldehyde + succinate + CO2. It carries out the reaction N(6)-methyl-L-lysyl-[protein] + 2-oxoglutarate + O2 = L-lysyl-[protein] + formaldehyde + succinate + CO2. Dioxygenase that mediates demethylation of actin monomethylated at 'Lys-84' (K84me1), thereby acting as a regulator of actomyosin-processes. Demethylation of actin K84me1 is required for maintaining actomyosin dynamics supporting normal cleavage furrow ingression during cytokinesis and cell migration. In addition to proteins, also demethylates DNA: specifically demethylates DNA methylated on the 6th position of adenine (N(6)-methyladenosine) DNA, thereby regulating Polycomb silencing. The sequence is that of Alpha-ketoglutarate-dependent dioxygenase alkB homolog 4 from Mus musculus (Mouse).